The sequence spans 770 residues: Elongation factor G, mitochondrial (770 aa).

A mitochondrion-targeting transit peptide spans 1-24; that stretch reads MLKLSFRSLTSRLPRLSTLVVRGY. One can recognise a tr-type G domain in the interval 57–353; that stretch reads KQIRNIGISA…AVCDYLPNPS (297 aa). GTP contacts are provided by residues 66–73, 151–155, and 205–208; these read AHIDSGKT, DTPGH, and NKMD.

Belongs to the TRAFAC class translation factor GTPase superfamily. Classic translation factor GTPase family. EF-G/EF-2 subfamily.

Its subcellular location is the mitochondrion. It participates in protein biosynthesis; polypeptide chain elongation. Mitochondrial GTPase that catalyzes the GTP-dependent ribosomal translocation step during translation elongation. During this step, the ribosome changes from the pre-translocational (PRE) to the post-translocational (POST) state as the newly formed A-site-bound peptidyl-tRNA and P-site-bound deacylated tRNA move to the P and E sites, respectively. Catalyzes the coordinated movement of the two tRNA molecules, the mRNA and conformational changes in the ribosome. This Schizosaccharomyces pombe (strain 972 / ATCC 24843) (Fission yeast) protein is Elongation factor G, mitochondrial (mef1).